The sequence spans 289 residues: Survival motor neuron protein (289 aa).

Residues 1–10 show a composition bias toward gly residues; the sequence is MAMGSGGGAG. The tract at residues 1–27 is disordered; that stretch reads MAMGSGGGAGSEQEDTVLFRRGTGQSD. The tract at residues 11 to 42 is P1 (binding site for GEMIN2); the sequence is SEQEDTVLFRRGTGQSDDSDIWDDTALIKAYD. Residue Thr23 is modified to Phosphothreonine. A phosphoserine mark is found at Ser26 and Ser29. Lys49 is covalently cross-linked (Glycyl lysine isopeptide (Lys-Gly) (interchain with G-Cter in SUMO2)). The tract at residues 55-88 is disordered; sequence GDMCETSDKPKGTARRKPAKKNKNQKKNATAPLK. Residues 66–80 are compositionally biased toward basic residues; that stretch reads GTARRKPAKKNKNQK. Thr67 carries the phosphothreonine modification. The Tudor domain occupies 89 to 149; the sequence is QWKAGDKCSA…LSPTCEVANN (61 aa). The interval 95–205 is required for interaction with RPP20/POP7; it reads KCSAVWSEDG…VPGAGLGPGK (111 aa). Residues 150–226 are disordered; that stretch reads TEQNTQENES…PPPPPPFLPC (77 aa). The span at 171-181 shows a compositional bias: basic residues; sequence RSLRSKAHSKS. Lys205 is covalently cross-linked (Glycyl lysine isopeptide (Lys-Gly) (interchain with G-Cter in SUMO2)). A compositionally biased stretch (pro residues) spans 212–226; the sequence is GPPPPPPPPPPFLPC. The P2 (binding site for SM B) stretch occupies residues 235–262; the sequence is PPIIPPPPPISPDCLDDTDALGSMLISW. The segment at 274-289 is required for interaction with SYNCRIP; that stretch reads GFRQNKKEGKKCSHTN.

The protein belongs to the SMN family. Homooligomer; may form higher order homooligomers in the dimer to octamer range. Part of the core SMN complex that contains SMN1, GEMIN2/SIP1, DDX20/GEMIN3, GEMIN4, GEMIN5, GEMIN6, GEMIN7, GEMIN8 and STRAP/UNRIP. Part of the SMN-Sm complex that contains SMN1, GEMIN2/SIP1, DDX20/GEMIN3, GEMIN4, GEMIN5, GEMIN6, GEMIN7, GEMIN8, STRAP/UNRIP and the Sm proteins SNRPB, SNRPD1, SNRPD2, SNRPD3, SNRPE, SNRPF and SNRPG. Component of an import snRNP complex composed of KPNB1, RNUT1, SMN1 and ZNF259. Interacts with DDX20, FBL, NOLA1, RNUT1 and with several spliceosomal snRNP core Sm proteins, including SNRPB, SNRPD1, SNRPD2, SNRPD3, SNRPE and ILF3. Interacts with GEMIN2; the interaction is direct. Interacts with GEMIN3; the interaction is direct. Interacts with GEMIN8; the interaction is direct. Interacts with SNRPB; the interaction is direct. Interacts (via Tudor domain) with SNRPD1 (via C-terminus); the interaction is direct. Interacts with SNRPD2; the interaction is direct. Interacts (via Tudor domain) with SNRPD3 (via C-terminus); the interaction is direct. Interacts with SNRPE; the interaction is direct. Interacts with OSTF1, LSM10, LSM11 and RPP20/POP7. Interacts (via C-terminal region) with ZPR1 (via C-terminal region). Interacts (via Tudor domain) with COIL. Interacts with SETX; recruits SETX to POLR2A. Interacts with POLR2A (via the C-terminal domain (CTD)). Interacts with PRMT5. Interacts with XRN2. Interacts (via C-terminus) with FMR1 (via C-terminus); the interaction is direct and occurs in a RNA-independent manner. Interacts with SYNCRIP. Interacts (via Tudor domain) with SF3B2 (methylated form). Interacts with WRAP53/TCAB1. Interacts (via Tudor domain) with ELAVL4 in an RNA-independent manner; the interaction is required for localization of ELAVL4 to RNA granules. Interacts with FRG1.

Its subcellular location is the nucleus. It is found in the gem. It localises to the cajal body. The protein resides in the cytoplasm. The protein localises to the cytoplasmic granule. Its subcellular location is the perikaryon. It is found in the cell projection. It localises to the neuron projection. The protein resides in the axon. The protein localises to the myofibril. Its subcellular location is the sarcomere. It is found in the z line. Its function is as follows. The SMN complex catalyzes the assembly of small nuclear ribonucleoproteins (snRNPs), the building blocks of the spliceosome, and thereby plays an important role in the splicing of cellular pre-mRNAs. Most spliceosomal snRNPs contain a common set of Sm proteins SNRPB, SNRPD1, SNRPD2, SNRPD3, SNRPE, SNRPF and SNRPG that assemble in a heptameric protein ring on the Sm site of the small nuclear RNA to form the core snRNP (Sm core). In the cytosol, the Sm proteins SNRPD1, SNRPD2, SNRPE, SNRPF and SNRPG are trapped in an inactive 6S pICln-Sm complex by the chaperone CLNS1A that controls the assembly of the core snRNP. To assemble core snRNPs, the SMN complex accepts the trapped 5Sm proteins from CLNS1A forming an intermediate. Binding of snRNA inside 5Sm ultimately triggers eviction of the SMN complex, thereby allowing binding of SNRPD3 and SNRPB to complete assembly of the core snRNP. Within the SMN complex, SMN1 acts as a structural backbone and together with GEMIN2 it gathers the Sm complex subunits. Ensures the correct splicing of U12 intron-containing genes that may be important for normal motor and proprioceptive neurons development. Also required for resolving RNA-DNA hybrids created by RNA polymerase II, that form R-loop in transcription terminal regions, an important step in proper transcription termination. May also play a role in the metabolism of small nucleolar ribonucleoprotein (snoRNPs). This chain is Survival motor neuron protein (Smn1), found in Rattus norvegicus (Rat).